The sequence spans 376 residues: Peroxisomal membrane protein PEX27 (376 aa).

Homooligomer. Interacts with PEX25 and PEX34.

The protein resides in the peroxisome membrane. In terms of biological role, required for regulation of peroxisome size and number. Also promotes peroxisome division and biogenesis. The polypeptide is Peroxisomal membrane protein PEX27 (PEX27) (Saccharomyces cerevisiae (strain ATCC 204508 / S288c) (Baker's yeast)).